Consider the following 561-residue polypeptide: MENRKGGNFSVPSSEALTTTLRNAIQALGRGFDVTSDVRLLYCKGAPGSRLVRIEEGQNRDLELSHGFLLPNVPADIDCSRGNSGTQRISVCSFHEMAEEFNVRSGVKGNIPLGCFNAMFNYTGSWQVDAASTKSLALVGYFIPLYDVKLAKLTLVLHNEIRRAVPSSWDPASLASFIENYGTHIVTSVTIGGRDVVYIRQHQSSPLPVSEIENYVNDMIKHRFHEAESQSITGPLKYKDKDITVIFRRRGGDDLEQSHARWAETVPAAPDIINMTFTPIVSLLEGVPGLRHLTRAIELYLEYKPPIEDLQYFLDYQIARAWAPEQSNLQRKEPVCSSLQFSLMGPKLFISADQVTVGRKPVTGLRLSLEGSKQNRLSIHLQHLVSLPKILQPHWDSHVPIGAPKWQGPEEQDSRWFEPIKWKNFSHVSTSPIEHTETHIGDLSGVHIVTGAQLGVWDFGSKNVLHLKLLFSKVPGCTIRRSVWDHTPVASSGRLEPGGPSTSSSTEEVSGQSGKLAKIVDSSEMLKGPQDLPGHWLVTGAKLGVEKGKIVLRVKYSLLNY.

Positions 11 to 314 (VPSSEALTTT…PPIEDLQYFL (304 aa)) constitute an MACPF domain. Positions 489-514 (VASSGRLEPGGPSTSSSTEEVSGQSG) are disordered. The span at 500–513 (PSTSSSTEEVSGQS) shows a compositional bias: polar residues.

The protein belongs to the complement C6/C7/C8/C9 (TC 1.C.39) family. Mainly expressed in the vascular system.

In terms of biological role, negatively controls the salicylic acid (SA)-mediated pathway of programmed cell death in plant immunity. The polypeptide is MACPF domain-containing protein CAD1 (CAD1) (Arabidopsis thaliana (Mouse-ear cress)).